A 194-amino-acid polypeptide reads, in one-letter code: Peptidyl-tRNA hydrolase (194 aa).

TRNA is bound at residue Tyr16. His21 (proton acceptor) is an active-site residue. Positions 67, 69, and 115 each coordinate tRNA.

It belongs to the PTH family. In terms of assembly, monomer.

The protein localises to the cytoplasm. It catalyses the reaction an N-acyl-L-alpha-aminoacyl-tRNA + H2O = an N-acyl-L-amino acid + a tRNA + H(+). Functionally, hydrolyzes ribosome-free peptidyl-tRNAs (with 1 or more amino acids incorporated), which drop off the ribosome during protein synthesis, or as a result of ribosome stalling. Catalyzes the release of premature peptidyl moieties from peptidyl-tRNA molecules trapped in stalled 50S ribosomal subunits, and thus maintains levels of free tRNAs and 50S ribosomes. The protein is Peptidyl-tRNA hydrolase of Colwellia psychrerythraea (strain 34H / ATCC BAA-681) (Vibrio psychroerythus).